We begin with the raw amino-acid sequence, 564 residues long: Dihydroxy-acid dehydratase (564 aa).

Cys53 contributes to the [2Fe-2S] cluster binding site. Asp85 lines the Mg(2+) pocket. Cys126 contributes to the [2Fe-2S] cluster binding site. Mg(2+)-binding residues include Asp127 and Lys128. Lys128 carries the N6-carboxylysine modification. Cys203 is a [2Fe-2S] cluster binding site. Glu454 contributes to the Mg(2+) binding site. The active-site Proton acceptor is the Ser480.

It belongs to the IlvD/Edd family. Homodimer. [2Fe-2S] cluster is required as a cofactor. Requires Mg(2+) as cofactor.

The enzyme catalyses (2R)-2,3-dihydroxy-3-methylbutanoate = 3-methyl-2-oxobutanoate + H2O. It catalyses the reaction (2R,3R)-2,3-dihydroxy-3-methylpentanoate = (S)-3-methyl-2-oxopentanoate + H2O. The protein operates within amino-acid biosynthesis; L-isoleucine biosynthesis; L-isoleucine from 2-oxobutanoate: step 3/4. It participates in amino-acid biosynthesis; L-valine biosynthesis; L-valine from pyruvate: step 3/4. In terms of biological role, functions in the biosynthesis of branched-chain amino acids. Catalyzes the dehydration of (2R,3R)-2,3-dihydroxy-3-methylpentanoate (2,3-dihydroxy-3-methylvalerate) into 2-oxo-3-methylpentanoate (2-oxo-3-methylvalerate) and of (2R)-2,3-dihydroxy-3-methylbutanoate (2,3-dihydroxyisovalerate) into 2-oxo-3-methylbutanoate (2-oxoisovalerate), the penultimate precursor to L-isoleucine and L-valine, respectively. The chain is Dihydroxy-acid dehydratase from Clavibacter michiganensis subsp. michiganensis (strain NCPPB 382).